A 956-amino-acid polypeptide reads, in one-letter code: MAM domain-containing glycosylphosphatidylinositol anchor protein 2 (956 aa).

An N-terminal signal peptide occupies residues 1–25; it reads MDLLYGLVWLLTVLLEGISGQGVYA. 2 Ig-like domains span residues 27 to 127 and 134 to 232; these read PTVR…IRVD and PVVT…KMVS. Disulfide bonds link cysteine 62–cysteine 110 and cysteine 159–cysteine 216. 3 N-linked (GlcNAc...) asparagine glycosylation sites follow: asparagine 92, asparagine 213, and asparagine 237. 4 Ig-like domains span residues 242-328, 340-436, 442-533, and 540-627; these read PSIK…NIIV, PDPY…VNIS, PNLT…ALVQ, and PAVE…FLVT. Cystine bridges form between cysteine 264/cysteine 310 and cysteine 359/cysteine 417. Residues asparagine 434, asparagine 443, asparagine 504, asparagine 610, and asparagine 703 are each glycosylated (N-linked (GlcNAc...) asparagine). Disulfide bonds link cysteine 465/cysteine 515 and cysteine 561/cysteine 611. In terms of domain architecture, Fibronectin type-III spans 638 to 739; it reads DTYNPVWQNR…IRVIKYSAPV (102 aa). The 176-residue stretch at 746 to 921 folds into the MAM domain; that stretch reads FHCGFEDGNI…VSIAEGECAK (176 aa). Aspartate 931 carries the GPI-anchor amidated aspartate lipid modification. The propeptide at 932-956 is removed in mature form; it reads GAVGILVHIWLFPIIVLISILSPRR.

Interacts (through the Ig-like domains) with NLGN2. Detected in Leydig cells, syncytiotrophoblast, duodenal villi epithelial cells and neutrophils from kidney and cutaneous squamous cell carcinoma (at protein level).

The protein resides in the cell membrane. May be involved in cell-cell interactions. This is MAM domain-containing glycosylphosphatidylinositol anchor protein 2 (MDGA2) from Homo sapiens (Human).